We begin with the raw amino-acid sequence, 44 residues long: Thaumatin-like protein 5 (44 aa).

It belongs to the thaumatin family.

This is Thaumatin-like protein 5 from Glebionis coronaria (Crown daisy).